Consider the following 338-residue polypeptide: 5-dehydro-2-deoxygluconokinase (338 aa).

The protein belongs to the carbohydrate kinase PfkB family.

The catalysed reaction is 5-dehydro-2-deoxy-D-gluconate + ATP = 6-phospho-5-dehydro-2-deoxy-D-gluconate + ADP + H(+). It functions in the pathway polyol metabolism; myo-inositol degradation into acetyl-CoA; acetyl-CoA from myo-inositol: step 5/7. Functionally, catalyzes the phosphorylation of 5-dehydro-2-deoxy-D-gluconate (2-deoxy-5-keto-D-gluconate or DKG) to 6-phospho-5-dehydro-2-deoxy-D-gluconate (DKGP). This is 5-dehydro-2-deoxygluconokinase from Mesomycoplasma hyopneumoniae (strain 232) (Mycoplasma hyopneumoniae).